The sequence spans 1064 residues: Lysine-specific demethylase 4A (1064 aa).

Ala2 is subject to N-acetylalanine. In terms of domain architecture, JmjN spans 14–56 (IMTFYPTMEEFRNFSRYIAYIESQGAHRAGLAKVVPPKEWKPR). Tyr132 serves as a coordination point for 2-oxoglutarate. The JmjC domain maps to 142–308 (EQHVDEWNIG…YGKQAVLCSC (167 aa)). Residues His188 and Glu190 each coordinate Fe cation. 2-oxoglutarate is bound by residues Asn198 and Lys206. Residues Cys234 and His240 each coordinate Zn(2+). Lys241 lines the 2-oxoglutarate pocket. His276 contributes to the Fe cation binding site. Cys306 and Cys308 together coordinate Zn(2+). Disordered regions lie at residues 354-384 (LKDS…EEGD), 434-489 (LAPV…LDLS), 502-537 (SGSK…QGQE), 549-573 (RGDG…SISE), and 590-643 (NKKT…LSQL). Residues 368–382 (ECPEEDVEAADQGEE) are compositionally biased toward acidic residues. Positions 460 to 472 (TEVKFEELKNVKL) are enriched in basic and acidic residues. A compositionally biased stretch (acidic residues) spans 473 to 482 (EEEDEEDEPE). Residues 509-525 (SSSLGSTSSQDSVSSDS) show a composition bias toward low complexity. Ser523 is subject to Phosphoserine. Over residues 528 to 537 (AESVSCQGQE) the composition is skewed to polar residues. Positions 593–608 (TKGRRQPLSKLPRHHP) are enriched in basic residues. Residues 597–638 (RQPLSKLPRHHPLVLQECGSDDETSEQLTPEEEAEETEAWAK) are interaction with NCOR1. Positions 615–634 (GSDDETSEQLTPEEEAEETE) are enriched in acidic residues. The PHD-type 1 zinc-finger motif lies at 709-767 (MCFTTTGCSTDINLSTPYLEEDGTSMLVSCKKCSVRVHASCYGVPPAKASEEWMCSRCS). A C2HC pre-PHD-type zinc finger spans residues 772–805 (EEDCCLCSLRGGALQRANDDRWVHVSCAVAILEA). A PHD-type 2 zinc finger spans residues 828 to 885 (LKCVFCKKRRKRNAGCCVQCSHGRCPTAFHVSCAQAAGVMMQPDDWPFVVFITCFRHK). 2 Tudor domains span residues 897–954 (LSIT…CLQL) and 955–1011 (GPPA…EELP).

Belongs to the JHDM3 histone demethylase family. In terms of assembly, interacts with histone deacetylase proteins HDAC1, HDAC2 and HDAC3. Interacts with RB and NCOR1. Interacts with VRK1. Requires Fe(2+) as cofactor. Post-translationally, ubiquitinated by RNF8 and RNF168, leading to its degradation. Degradation promotes accessibility of H4K20me2 mark for DNA repair protein TP53BP1, which is then recruited. Also ubiquitinated by the SCF(FBXO22) complex; leading to proteasomal degradation. Widely expressed.

The protein resides in the nucleus. The catalysed reaction is N(6),N(6),N(6)-trimethyl-L-lysyl(9)-[histone H3] + 2 2-oxoglutarate + 2 O2 = N(6)-methyl-L-lysyl(9)-[histone H3] + 2 formaldehyde + 2 succinate + 2 CO2. It carries out the reaction N(6),N(6),N(6)-trimethyl-L-lysyl(36)-[histone H3] + 2 2-oxoglutarate + 2 O2 = N(6)-methyl-L-lysyl(36)-[histone H3] + 2 formaldehyde + 2 succinate + 2 CO2. Its function is as follows. Histone demethylase that specifically demethylates 'Lys-9' and 'Lys-36' residues of histone H3, thereby playing a central role in histone code. Does not demethylate histone H3 'Lys-4', H3 'Lys-27' nor H4 'Lys-20'. Demethylates trimethylated H3 'Lys-9' and H3 'Lys-36' residue, while it has no activity on mono- and dimethylated residues. Demethylation of Lys residue generates formaldehyde and succinate. Participates in transcriptional repression of ASCL2 and E2F-responsive promoters via the recruitment of histone deacetylases and NCOR1, respectively. In Mus musculus (Mouse), this protein is Lysine-specific demethylase 4A (Kdm4a).